We begin with the raw amino-acid sequence, 108 residues long: uncharacterized protein (108 aa).

Residues 59-81 (NIVIILWKIMVVIISSIIHRTYI) form a helical membrane-spanning segment.

Its subcellular location is the membrane. This is an uncharacterized protein from Rickettsia conorii (strain ATCC VR-613 / Malish 7).